The chain runs to 552 residues: DNA ligase (552 aa).

An ATP-binding site is contributed by glutamate 229. Catalysis depends on lysine 231, which acts as the N6-AMP-lysine intermediate. ATP is bound by residues arginine 236 and glutamate 283. Positions 283 and 377 each coordinate Mg(2+). ATP contacts are provided by lysine 382 and lysine 397.

This sequence belongs to the ATP-dependent DNA ligase family. In terms of assembly, interacts with host TOP2A and TOP2B. It depends on Mg(2+) as a cofactor.

Its subcellular location is the host cytoplasm. The catalysed reaction is ATP + (deoxyribonucleotide)n-3'-hydroxyl + 5'-phospho-(deoxyribonucleotide)m = (deoxyribonucleotide)n+m + AMP + diphosphate.. Functionally, DNA ligase that seals nicks in double-stranded DNA during DNA replication, DNA recombination and DNA repair. Recruits cellular topoisomerase II to sites of viral replication and assembly. The protein is DNA ligase (OPG180) of Vaccinia virus (strain Copenhagen) (VACV).